Consider the following 394-residue polypeptide: S-adenosylmethionine synthase 1 (394 aa).

Residue E11 coordinates Mg(2+). Position 17 (H17) interacts with ATP. Residue E45 coordinates K(+). L-methionine is bound by residues E58 and Q101. ATP contacts are provided by residues 169 to 171 (DGK), 237 to 240 (SGRF), D248, 254 to 255 (RK), A271, K275, and K279. D248 contacts L-methionine. K279 serves as a coordination point for L-methionine.

It belongs to the AdoMet synthase family. In terms of assembly, homotetramer. It depends on Mn(2+) as a cofactor. Mg(2+) is required as a cofactor. Requires Co(2+) as cofactor. The cofactor is K(+).

It is found in the cytoplasm. It catalyses the reaction L-methionine + ATP + H2O = S-adenosyl-L-methionine + phosphate + diphosphate. The protein operates within amino-acid biosynthesis; S-adenosyl-L-methionine biosynthesis; S-adenosyl-L-methionine from L-methionine: step 1/1. Catalyzes the formation of S-adenosylmethionine from methionine and ATP. The reaction comprises two steps that are both catalyzed by the same enzyme: formation of S-adenosylmethionine (AdoMet) and triphosphate, and subsequent hydrolysis of the triphosphate. In Triticum monococcum (Einkorn wheat), this protein is S-adenosylmethionine synthase 1 (SAMS1).